We begin with the raw amino-acid sequence, 178 residues long: Cell division protein ZapC (178 aa).

The protein belongs to the ZapC family. As to quaternary structure, interacts directly with FtsZ.

Its subcellular location is the cytoplasm. Its function is as follows. Contributes to the efficiency of the cell division process by stabilizing the polymeric form of the cell division protein FtsZ. Acts by promoting interactions between FtsZ protofilaments and suppressing the GTPase activity of FtsZ. This is Cell division protein ZapC from Pseudoalteromonas atlantica (strain T6c / ATCC BAA-1087).